The primary structure comprises 198 residues: Nucleoid occlusion factor SlmA (198 aa).

Residues 11–71 (PNRKHQILES…GLIDFIEESI (61 aa)) enclose the HTH tetR-type domain. A DNA-binding region (H-T-H motif) is located at residues 34 to 53 (TTAKLAAEVGFSEAALYRHF).

It belongs to the nucleoid occlusion factor SlmA family. As to quaternary structure, homodimer. Interacts with FtsZ.

The protein resides in the cytoplasm. It is found in the nucleoid. Required for nucleoid occlusion (NO) phenomenon, which prevents Z-ring formation and cell division over the nucleoid. Acts as a DNA-associated cell division inhibitor that binds simultaneously chromosomal DNA and FtsZ, and disrupts the assembly of FtsZ polymers. SlmA-DNA-binding sequences (SBS) are dispersed on non-Ter regions of the chromosome, preventing FtsZ polymerization at these regions. This Colwellia psychrerythraea (strain 34H / ATCC BAA-681) (Vibrio psychroerythus) protein is Nucleoid occlusion factor SlmA.